The chain runs to 766 residues: UPF0313 protein PP_4872 (766 aa).

The Radical SAM core domain maps to 371-649; sequence AYEMIRFSVN…KAFLRYHDPK (279 aa). Cysteine 385, cysteine 389, and cysteine 392 together coordinate [4Fe-4S] cluster. Positions 670–766 are disordered; the sequence is GKHQLIPLHQ…KKPRQPVIPR (97 aa). The span at 723-735 shows a compositional bias: basic and acidic residues; that stretch reads KPWDKREKAKAEA.

This sequence belongs to the UPF0313 family. Requires [4Fe-4S] cluster as cofactor.

The protein is UPF0313 protein PP_4872 of Pseudomonas putida (strain ATCC 47054 / DSM 6125 / CFBP 8728 / NCIMB 11950 / KT2440).